The primary structure comprises 358 residues: Phenylalanine--tRNA ligase alpha subunit (358 aa).

Glu-279 serves as a coordination point for Mg(2+).

It belongs to the class-II aminoacyl-tRNA synthetase family. Phe-tRNA synthetase alpha subunit type 1 subfamily. Tetramer of two alpha and two beta subunits. Requires Mg(2+) as cofactor.

The protein resides in the cytoplasm. The catalysed reaction is tRNA(Phe) + L-phenylalanine + ATP = L-phenylalanyl-tRNA(Phe) + AMP + diphosphate + H(+). This is Phenylalanine--tRNA ligase alpha subunit from Variovorax paradoxus (strain S110).